A 130-amino-acid polypeptide reads, in one-letter code: Large ribosomal subunit protein bL17 (130 aa).

It belongs to the bacterial ribosomal protein bL17 family. In terms of assembly, part of the 50S ribosomal subunit. Contacts protein L32.

In Photorhabdus laumondii subsp. laumondii (strain DSM 15139 / CIP 105565 / TT01) (Photorhabdus luminescens subsp. laumondii), this protein is Large ribosomal subunit protein bL17.